A 252-amino-acid chain; its full sequence is Hydroxyacylglutathione hydrolase (252 aa).

Zn(2+)-binding residues include His52, His54, Asp56, His57, His107, Asp128, and His166.

The protein belongs to the metallo-beta-lactamase superfamily. Glyoxalase II family. As to quaternary structure, monomer. Requires Zn(2+) as cofactor.

The enzyme catalyses an S-(2-hydroxyacyl)glutathione + H2O = a 2-hydroxy carboxylate + glutathione + H(+). Its pathway is secondary metabolite metabolism; methylglyoxal degradation; (R)-lactate from methylglyoxal: step 2/2. Functionally, thiolesterase that catalyzes the hydrolysis of S-D-lactoyl-glutathione to form glutathione and D-lactic acid. The chain is Hydroxyacylglutathione hydrolase from Neisseria meningitidis serogroup C (strain 053442).